The following is a 99-amino-acid chain: Aspartyl/glutamyl-tRNA(Asn/Gln) amidotransferase subunit C (99 aa).

It belongs to the GatC family. Heterotrimer of A, B and C subunits.

The catalysed reaction is L-glutamyl-tRNA(Gln) + L-glutamine + ATP + H2O = L-glutaminyl-tRNA(Gln) + L-glutamate + ADP + phosphate + H(+). It carries out the reaction L-aspartyl-tRNA(Asn) + L-glutamine + ATP + H2O = L-asparaginyl-tRNA(Asn) + L-glutamate + ADP + phosphate + 2 H(+). In terms of biological role, allows the formation of correctly charged Asn-tRNA(Asn) or Gln-tRNA(Gln) through the transamidation of misacylated Asp-tRNA(Asn) or Glu-tRNA(Gln) in organisms which lack either or both of asparaginyl-tRNA or glutaminyl-tRNA synthetases. The reaction takes place in the presence of glutamine and ATP through an activated phospho-Asp-tRNA(Asn) or phospho-Glu-tRNA(Gln). This is Aspartyl/glutamyl-tRNA(Asn/Gln) amidotransferase subunit C from Cupriavidus metallidurans (strain ATCC 43123 / DSM 2839 / NBRC 102507 / CH34) (Ralstonia metallidurans).